A 256-amino-acid chain; its full sequence is Ubiquinone biosynthesis O-methyltransferase (256 aa).

The S-adenosyl-L-methionine site is built by arginine 44, glycine 80, aspartate 101, and methionine 144.

The protein belongs to the methyltransferase superfamily. UbiG/COQ3 family.

The enzyme catalyses a 3-demethylubiquinol + S-adenosyl-L-methionine = a ubiquinol + S-adenosyl-L-homocysteine + H(+). It carries out the reaction a 3-(all-trans-polyprenyl)benzene-1,2-diol + S-adenosyl-L-methionine = a 2-methoxy-6-(all-trans-polyprenyl)phenol + S-adenosyl-L-homocysteine + H(+). Its pathway is cofactor biosynthesis; ubiquinone biosynthesis. Its function is as follows. O-methyltransferase that catalyzes the 2 O-methylation steps in the ubiquinone biosynthetic pathway. This is Ubiquinone biosynthesis O-methyltransferase from Methylocella silvestris (strain DSM 15510 / CIP 108128 / LMG 27833 / NCIMB 13906 / BL2).